Here is a 619-residue protein sequence, read N- to C-terminus: Chaperone protein DnaK (619 aa).

T175 is subject to Phosphothreonine; by autocatalysis. The segment at 578 to 619 is disordered; that stretch reads NGGAQGEGFDPNNMGGANAGTGAANSNDDNVVDADFEVQDDK. Residues 589–606 show a composition bias toward low complexity; that stretch reads NNMGGANAGTGAANSNDD. Residues 607 to 619 show a composition bias toward acidic residues; the sequence is NVVDADFEVQDDK.

It belongs to the heat shock protein 70 family.

Acts as a chaperone. This Clostridium perfringens (strain SM101 / Type A) protein is Chaperone protein DnaK.